The chain runs to 150 residues: 3-hydroxyacyl-[acyl-carrier-protein] dehydratase FabZ (150 aa).

H57 is an active-site residue.

Belongs to the thioester dehydratase family. FabZ subfamily.

The protein localises to the cytoplasm. The enzyme catalyses a (3R)-hydroxyacyl-[ACP] = a (2E)-enoyl-[ACP] + H2O. Its function is as follows. Involved in unsaturated fatty acids biosynthesis. Catalyzes the dehydration of short chain beta-hydroxyacyl-ACPs and long chain saturated and unsaturated beta-hydroxyacyl-ACPs. This chain is 3-hydroxyacyl-[acyl-carrier-protein] dehydratase FabZ, found in Actinobacillus succinogenes (strain ATCC 55618 / DSM 22257 / CCUG 43843 / 130Z).